The sequence spans 89 residues: Small ribosomal subunit protein bS20 (89 aa).

It belongs to the bacterial ribosomal protein bS20 family.

Its function is as follows. Binds directly to 16S ribosomal RNA. This Stenotrophomonas maltophilia (strain R551-3) protein is Small ribosomal subunit protein bS20.